Reading from the N-terminus, the 715-residue chain is MTTTSAFMLNVRLDNVAVVAIDVPGEKVNTLKAEFAAQVRAILKQIRENKALQGVVFISAKADNFIAGADINIIGHCQNAQEAETLARQGQQLMAEIQALPVPVIAAIHGACLGGGLEMALACHRRICTDDVKTVLGLPEVQLGLLPGSGGTQRLPRLVGVSTALDMILIGKQLRARQALKAGLVDDVVPQTILLEAAVELAKKERLAQRTLPVRERILAGPLGRALLFRLVRKKTAQKTQGNYPATERIIDVIETGLAQGSSSGYDAEARAFGELAMTPQSQALRAVFFASTEVKKDPGSDAPPGPLNSVGILGGGLMGGGIAWVTACKGGLPVRIKDINTQGINHALKYSWDLLETKVRRRHIKASERDKQLALISGSTDYRGFSHRDLVIEAVFEDLPLKQQMVAEVEQNCATHTIFASNTSSLPIGDIAANAARPEQVIGLHFFSPVEKMPLVEVIPHASTSAQTIATTVKLAKKQGKTPIVVSDKAGFYVNRILAPYINEAIRMLTEGERVEHIDAALVKFGFPVGPIQLLDEVGIDTGTKIIPVLEAAYGERFSAPANVVASILNDDRKGRKNGRGFYLYGEKGRKSKKQVDPAIYKLIGVQGQSRLSAQQVAERCVMLMLNEAARCFDEKVIRSARDGDIGAVFGIGFPPFLGGPFRYMDALGPGEMVATLQRLAALYGPRYAPCEQLVRMAERREHFWTNGETDQGN.

The segment at 1 to 190 (MTTTSAFMLN…KAGLVDDVVP (190 aa)) is enoyl-CoA hydratase. The interval 306-714 (GPLNSVGILG…FWTNGETDQG (409 aa)) is 3-hydroxyacyl-CoA dehydrogenase.

The protein in the N-terminal section; belongs to the enoyl-CoA hydratase/isomerase family. This sequence in the central section; belongs to the 3-hydroxyacyl-CoA dehydrogenase family. In terms of assembly, heterotetramer of two alpha chains (FadJ) and two beta chains (FadI).

Its subcellular location is the cytoplasm. The enzyme catalyses a (3S)-3-hydroxyacyl-CoA = a (2E)-enoyl-CoA + H2O. It catalyses the reaction a 4-saturated-(3S)-3-hydroxyacyl-CoA = a (3E)-enoyl-CoA + H2O. It carries out the reaction a (3S)-3-hydroxyacyl-CoA + NAD(+) = a 3-oxoacyl-CoA + NADH + H(+). The catalysed reaction is (3S)-3-hydroxybutanoyl-CoA = (3R)-3-hydroxybutanoyl-CoA. Its pathway is lipid metabolism; fatty acid beta-oxidation. In terms of biological role, catalyzes the formation of a hydroxyacyl-CoA by addition of water on enoyl-CoA. Also exhibits 3-hydroxyacyl-CoA epimerase and 3-hydroxyacyl-CoA dehydrogenase activities. The sequence is that of Fatty acid oxidation complex subunit alpha from Salmonella paratyphi A (strain ATCC 9150 / SARB42).